We begin with the raw amino-acid sequence, 99 residues long: Meromycolate extension acyl carrier protein (99 aa).

Positions 3–81 constitute a Carrier domain; the sequence is ATQEEIIAGL…DVVAYIQKLE (79 aa). Ser-41 is modified (O-(pantetheine 4'-phosphoryl)serine). An Isoglutamyl lysine isopeptide (Lys-Gln) (interchain with Q-Cter in protein Pup) cross-link involves residue Lys-79.

The protein belongs to the acyl carrier protein (ACP) family. In terms of processing, 4'-phosphopantetheine is transferred from CoA to a specific serine of apo-AcpM.

It localises to the cytoplasm. Acyl carrier protein involved in meromycolate extension. The sequence is that of Meromycolate extension acyl carrier protein (acpM) from Mycolicibacterium smegmatis (strain ATCC 700084 / mc(2)155) (Mycobacterium smegmatis).